We begin with the raw amino-acid sequence, 116 residues long: Putative iron-sulfur cluster insertion protein ErpA (116 aa).

Iron-sulfur cluster contacts are provided by Cys-44, Cys-108, and Cys-110.

Belongs to the HesB/IscA family. Homodimer. The cofactor is iron-sulfur cluster.

Required for insertion of 4Fe-4S clusters. This is Putative iron-sulfur cluster insertion protein ErpA from Azoarcus sp. (strain BH72).